The chain runs to 759 residues: Multifunctional tryptophan biosynthesis protein (759 aa).

Residues 27-223 (PIVMIDNYDS…LNLTAGTWEE (197 aa)) enclose the Glutamine amidotransferase type-1 domain. An L-glutamine-binding site is contributed by 80-82 (GPG). Residue cysteine 108 is the Nucleophile; for GATase activity of the active site. L-glutamine is bound by residues glutamine 112 and 158–159 (SL). Residues histidine 197 and glutamate 199 each act as for GATase activity in the active site. Residues 257 to 519 (ILEKIHAQRL…DPAAFARELL (263 aa)) are indole-3-glycerol phosphate synthase. Residues 536-759 (LVKVCGTRSL…KAFINAVKEL (224 aa)) form an N-(5'-phosphoribosyl)anthranilate isomerase region.

The catalysed reaction is N-(5-phospho-beta-D-ribosyl)anthranilate = 1-(2-carboxyphenylamino)-1-deoxy-D-ribulose 5-phosphate. It carries out the reaction 1-(2-carboxyphenylamino)-1-deoxy-D-ribulose 5-phosphate + H(+) = (1S,2R)-1-C-(indol-3-yl)glycerol 3-phosphate + CO2 + H2O. It catalyses the reaction chorismate + L-glutamine = anthranilate + pyruvate + L-glutamate + H(+). The protein operates within amino-acid biosynthesis; L-tryptophan biosynthesis; L-tryptophan from chorismate: step 1/5. Its pathway is amino-acid biosynthesis; L-tryptophan biosynthesis; L-tryptophan from chorismate: step 3/5. It participates in amino-acid biosynthesis; L-tryptophan biosynthesis; L-tryptophan from chorismate: step 4/5. Functionally, trifunctional enzyme bearing the Gln amidotransferase (GATase) domain of anthranilate synthase, indole-glycerolphosphate synthase, and phosphoribosylanthranilate isomerase activities. The sequence is that of Multifunctional tryptophan biosynthesis protein (trp1) from Schizosaccharomyces pombe (strain 972 / ATCC 24843) (Fission yeast).